Reading from the N-terminus, the 210-residue chain is ATP-dependent Clp protease proteolytic subunit (210 aa).

The Nucleophile role is filled by serine 106. Histidine 131 is a catalytic residue.

It belongs to the peptidase S14 family. As to quaternary structure, fourteen ClpP subunits assemble into 2 heptameric rings which stack back to back to give a disk-like structure with a central cavity, resembling the structure of eukaryotic proteasomes.

Its subcellular location is the cytoplasm. The enzyme catalyses Hydrolysis of proteins to small peptides in the presence of ATP and magnesium. alpha-casein is the usual test substrate. In the absence of ATP, only oligopeptides shorter than five residues are hydrolyzed (such as succinyl-Leu-Tyr-|-NHMec, and Leu-Tyr-Leu-|-Tyr-Trp, in which cleavage of the -Tyr-|-Leu- and -Tyr-|-Trp bonds also occurs).. In terms of biological role, cleaves peptides in various proteins in a process that requires ATP hydrolysis. Has a chymotrypsin-like activity. Plays a major role in the degradation of misfolded proteins. This is ATP-dependent Clp protease proteolytic subunit from Bartonella quintana (strain Toulouse) (Rochalimaea quintana).